Here is a 227-residue protein sequence, read N- to C-terminus: Cytidylate kinase (227 aa).

An ATP-binding site is contributed by 10–18 (GPASSGKST).

The protein belongs to the cytidylate kinase family. Type 1 subfamily.

The protein resides in the cytoplasm. It catalyses the reaction CMP + ATP = CDP + ADP. The enzyme catalyses dCMP + ATP = dCDP + ADP. In Streptococcus agalactiae serotype Ia (strain ATCC 27591 / A909 / CDC SS700), this protein is Cytidylate kinase.